The following is a 342-amino-acid chain: Tetraacyldisaccharide 4'-kinase (342 aa).

68-75 (TVGGTGKT) serves as a coordination point for ATP.

This sequence belongs to the LpxK family.

It carries out the reaction a lipid A disaccharide + ATP = a lipid IVA + ADP + H(+). It participates in glycolipid biosynthesis; lipid IV(A) biosynthesis; lipid IV(A) from (3R)-3-hydroxytetradecanoyl-[acyl-carrier-protein] and UDP-N-acetyl-alpha-D-glucosamine: step 6/6. Functionally, transfers the gamma-phosphate of ATP to the 4'-position of a tetraacyldisaccharide 1-phosphate intermediate (termed DS-1-P) to form tetraacyldisaccharide 1,4'-bis-phosphate (lipid IVA). In Burkholderia cenocepacia (strain HI2424), this protein is Tetraacyldisaccharide 4'-kinase.